The sequence spans 234 residues: Phosphoribosylaminoimidazole-succinocarboxamide synthase (234 aa).

The protein belongs to the SAICAR synthetase family.

It catalyses the reaction 5-amino-1-(5-phospho-D-ribosyl)imidazole-4-carboxylate + L-aspartate + ATP = (2S)-2-[5-amino-1-(5-phospho-beta-D-ribosyl)imidazole-4-carboxamido]succinate + ADP + phosphate + 2 H(+). It participates in purine metabolism; IMP biosynthesis via de novo pathway; 5-amino-1-(5-phospho-D-ribosyl)imidazole-4-carboxamide from 5-amino-1-(5-phospho-D-ribosyl)imidazole-4-carboxylate: step 1/2. The sequence is that of Phosphoribosylaminoimidazole-succinocarboxamide synthase from Sulfurisphaera tokodaii (strain DSM 16993 / JCM 10545 / NBRC 100140 / 7) (Sulfolobus tokodaii).